The primary structure comprises 215 residues: Urease accessory protein UreF (215 aa).

It belongs to the UreF family. UreD, UreF and UreG form a complex that acts as a GTP-hydrolysis-dependent molecular chaperone, activating the urease apoprotein by helping to assemble the nickel containing metallocenter of UreC. The UreE protein probably delivers the nickel.

The protein resides in the cytoplasm. Functionally, required for maturation of urease via the functional incorporation of the urease nickel metallocenter. The chain is Urease accessory protein UreF from Paracoccus denitrificans (strain Pd 1222).